Reading from the N-terminus, the 695-residue chain is IQ domain-containing protein E (695 aa).

The disordered stretch occupies residues 29–55 (KAKRKAFHKPPPTSPKSPYLSKPRKVA). 3 coiled-coil regions span residues 157–264 (LHVQ…RLQT), 292–358 (SALL…SSKS), and 387–477 (NKDH…CPEV). Phosphoserine is present on S322. Disordered stretches follow at residues 357 to 390 (KSHA…NKDH), 465 to 521 (EMKK…RRDA), 564 to 599 (ASKA…TGSP), and 618 to 695 (RARH…NFPV). The segment covering 465 to 482 (EMKKEEKEDCPEVPHKAQ) has biased composition (basic and acidic residues). IQ domains lie at 542 to 571 (LDEA…HGSE) and 601 to 630 (QEEA…RTTT).

Component of the EvC complex composed of EFCAB7, IQCE, EVC2 and EVC; built from two subcomplexes, EVC2:EVC and EFCAB7:IQCE. Interacts (via N-terminus) with EFCAB7 (via EF-hands 1 and 2); this interaction anchors the EVC-EVC2 complex in a signaling microdomain at the base of cilia and stimulates the Hedgehog (Hh) pathway. Interacts with EVC2 (via N-terminal end). Interacts with EVC.

The protein localises to the cell projection. Its subcellular location is the cilium membrane. Its function is as follows. Component of the EvC complex that positively regulates ciliary Hedgehog (Hh) signaling. Required for proper limb morphogenesis. The chain is IQ domain-containing protein E (IQCE) from Homo sapiens (Human).